The chain runs to 309 residues: tRNA uridine(34) hydroxylase (309 aa).

One can recognise a Rhodanese domain in the interval 129 to 223 (SEPGTIVIDT…YLEEVPAEQS (95 aa)). Cys-183 (cysteine persulfide intermediate) is an active-site residue. The tract at residues 288 to 309 (YAERQRQVELAQARGKRPHIGS) is disordered.

It belongs to the TrhO family.

The enzyme catalyses uridine(34) in tRNA + AH2 + O2 = 5-hydroxyuridine(34) in tRNA + A + H2O. Catalyzes oxygen-dependent 5-hydroxyuridine (ho5U) modification at position 34 in tRNAs. The polypeptide is tRNA uridine(34) hydroxylase (Mesorhizobium japonicum (strain LMG 29417 / CECT 9101 / MAFF 303099) (Mesorhizobium loti (strain MAFF 303099))).